A 511-amino-acid polypeptide reads, in one-letter code: NADH-ubiquinone oxidoreductase chain 4 (511 aa).

Transmembrane regions (helical) follow at residues 1–21 (MNQI…IIII), 39–59 (ISLL…YLFN), 78–98 (IDGI…ISLI), 116–136 (VLLI…LDLI), 137–157 (TFYI…GKLG), 186–206 (YIFI…GIYI), 220–240 (IILS…GILV), 264–284 (IILA…LILI), 289–309 (VIII…FYIG), 318–338 (IKVI…MSIF), 349–369 (LLIS…VGGI), 388–408 (YMPI…GIPL), 422–442 (IFIY…ITTI), and 476–496 (LLLN…NLII).

This sequence belongs to the complex I subunit 4 family.

It localises to the mitochondrion membrane. It catalyses the reaction a ubiquinone + NADH + 5 H(+)(in) = a ubiquinol + NAD(+) + 4 H(+)(out). In terms of biological role, core subunit of the mitochondrial membrane respiratory chain NADH dehydrogenase (Complex I) that is believed to belong to the minimal assembly required for catalysis. Complex I functions in the transfer of electrons from NADH to the respiratory chain. The immediate electron acceptor for the enzyme is believed to be ubiquinone. This is NADH-ubiquinone oxidoreductase chain 4 (ND4) from Wickerhamomyces canadensis (Yeast).